A 302-amino-acid chain; its full sequence is MALVASVRVPARVLLRAGARLPGAALGRTERAAGGGDGARRFGSQRVLVEPDAGAGVAVMKFKNPPVNSLSLEFLTELVISLEKLENDKSFRGVILTSDRPGVFSAGLDLTEMCGRSPAHYAGYWKAVQELWLRLYQSNLVLVSAINGACPAGGCLVALTCDYRILADNPRYCIGLNETQLGIIAPFWLKDTLENTIGHRAAERALQLGLLFPPAEALQVGIVDQVVPEEQVQSTALSAIAQWMAIPDHARQLTKAMMRKATASRLVTQRDADVQNFVSFISKDSIQKSLQMYLERLKEEKG.

The transit peptide at 1-41 directs the protein to the mitochondrion; it reads MALVASVRVPARVLLRAGARLPGAALGRTERAAGGGDGARR. Lys-61 carries the N6-acetyllysine; alternate modification. Lys-61 is modified (N6-succinyllysine; alternate). Lys-84 is modified (N6-succinyllysine). The residue at position 89 (Lys-89) is an N6-acetyllysine. Residues 106-110, Gly-153, and Asn-177 contribute to the substrate site; that span reads AGLDL. Position 283 is an N6-acetyllysine; alternate (Lys-283). N6-succinyllysine; alternate is present on Lys-283. N6-succinyllysine is present on Lys-288.

The protein belongs to the enoyl-CoA hydratase/isomerase family. As to quaternary structure, homotrimer. Expressed in liver (at protein level).

It is found in the mitochondrion matrix. The catalysed reaction is a (3Z)-enoyl-CoA = a 4-saturated (2E)-enoyl-CoA. The enzyme catalyses a (3E)-enoyl-CoA = a 4-saturated (2E)-enoyl-CoA. It carries out the reaction (3Z)-octenoyl-CoA = (2E)-octenoyl-CoA. It catalyses the reaction (2E)-tetradecenoyl-CoA = (3Z)-tetradecenoyl-CoA. The catalysed reaction is (3Z)-dodecenoyl-CoA = (2E)-dodecenoyl-CoA. The enzyme catalyses (3Z)-hexenoyl-CoA = (2E)-hexenoyl-CoA. It carries out the reaction (3Z)-decenoyl-CoA = (2E)-decenoyl-CoA. It functions in the pathway lipid metabolism; fatty acid beta-oxidation. Its function is as follows. Key enzyme of fatty acid beta-oxidation. Able to isomerize both 3-cis (3Z) and 3-trans (3E) double bonds into the 2-trans (2E) form in a range of enoyl-CoA species, with a preference for (3Z)-enoyl-CoAs over (3E)-enoyl-CoAs. The catalytic efficiency of this enzyme is not affected by the fatty acyl chain length. This chain is Enoyl-CoA delta isomerase 1, mitochondrial (ECI1), found in Homo sapiens (Human).